We begin with the raw amino-acid sequence, 89 residues long: UPF0335 protein RPE_4107 (89 aa).

Belongs to the UPF0335 family.

The chain is UPF0335 protein RPE_4107 from Rhodopseudomonas palustris (strain BisA53).